Consider the following 546-residue polypeptide: Probable protein kinase UbiB (546 aa).

The region spanning 123–501 is the Protein kinase domain; it reads DFQEIPLASA…RTNHGQALFL (379 aa). ATP contacts are provided by residues 129–137 and lysine 152; that span reads LASASISQV. Aspartate 287 (proton acceptor) is an active-site residue. 2 helical membrane passes run 497-517 and 521-541; these read QALF…FLYI and YLKI…TIGW.

The protein belongs to the ABC1 family. UbiB subfamily.

The protein resides in the cell inner membrane. The protein operates within cofactor biosynthesis; ubiquinone biosynthesis [regulation]. Its function is as follows. Is probably a protein kinase regulator of UbiI activity which is involved in aerobic coenzyme Q (ubiquinone) biosynthesis. This chain is Probable protein kinase UbiB, found in Blochmanniella pennsylvanica (strain BPEN).